Here is a 100-residue protein sequence, read N- to C-terminus: UPF0213 protein YhbQ (100 aa).

The GIY-YIG domain occupies 2–77; that stretch reads TPWYLYLIRT…KQLTKRQKER (76 aa).

Belongs to the UPF0213 family.

In Salmonella choleraesuis (strain SC-B67), this protein is UPF0213 protein YhbQ.